Here is a 257-residue protein sequence, read N- to C-terminus: MIRQEKMRVVSQKQIATNIFELTLHGELVQDMTPGQFVHVKVSDSLEPLLRRPISIANIDKDNNEFTMIYRAEGRGTKVLATNREGQQVNVLGPIGNGFPVDAVKEGGTALLVGGGIGVPPLHELSKQLNARGVKTIHVLGFQTEDVCFYEEEFSALGETHYVTVDGSKGTKGFVTNVLESRAPEFDVFYSCGPLPMLKALEGFYPEKEGYLSFEERMGCGIGACFACVCKTTDQIAKDYVKVCSDGPVFPKGTVAL.

Residues 2 to 101 enclose the FAD-binding FR-type domain; the sequence is IRQEKMRVVS…LGPIGNGFPV (100 aa). Residues 52-55, 69-71, and 76-77 contribute to the FAD site; these read RPIS, IYR, and GT. Residues Cys220, Cys225, Cys228, and Cys244 each contribute to the [2Fe-2S] cluster site.

This sequence belongs to the PyrK family. As to quaternary structure, heterotetramer of 2 PyrK and 2 PyrD type B subunits. It depends on [2Fe-2S] cluster as a cofactor. FAD serves as cofactor.

The protein operates within pyrimidine metabolism; UMP biosynthesis via de novo pathway; orotate from (S)-dihydroorotate (NAD(+) route): step 1/1. Its function is as follows. Responsible for channeling the electrons from the oxidation of dihydroorotate from the FMN redox center in the PyrD type B subunit to the ultimate electron acceptor NAD(+). This is Dihydroorotate dehydrogenase B (NAD(+)), electron transfer subunit from Lysinibacillus sphaericus (strain C3-41).